We begin with the raw amino-acid sequence, 75 residues long: Small integral membrane protein 7 (75 aa).

A signal peptide spans 1–17; sequence MIGDILLFGTLLMNAGA. Over 18 to 53 the chain is Extracellular; it reads VLNFKLKKKDTQGFGEESREPSTGDNIREFLLSLRY. A helical transmembrane segment spans residues 54-74; sequence FRIFIALWNIFMMFCMIVLFG. Residue Ser75 is a topological domain, cytoplasmic.

It belongs to the SMIM7 family.

It localises to the membrane. The chain is Small integral membrane protein 7 (SMIM7) from Homo sapiens (Human).